A 304-amino-acid polypeptide reads, in one-letter code: ATP synthase gamma chain (304 aa).

It belongs to the ATPase gamma chain family. In terms of assembly, F-type ATPases have 2 components, CF(1) - the catalytic core - and CF(0) - the membrane proton channel. CF(1) has five subunits: alpha(3), beta(3), gamma(1), delta(1), epsilon(1). CF(0) has three main subunits: a, b and c.

The protein resides in the cell membrane. Produces ATP from ADP in the presence of a proton gradient across the membrane. The gamma chain is believed to be important in regulating ATPase activity and the flow of protons through the CF(0) complex. The polypeptide is ATP synthase gamma chain (Thermobifida fusca (strain YX)).